Consider the following 178-residue polypeptide: ATP synthase subunit b, chloroplastic (178 aa).

The helical transmembrane segment at L34–S50 threads the bilayer.

The protein belongs to the ATPase B chain family. F-type ATPases have 2 components, F(1) - the catalytic core - and F(0) - the membrane proton channel. F(1) has five subunits: alpha(3), beta(3), gamma(1), delta(1), epsilon(1). F(0) has four main subunits: a(1), b(1), b'(1) and c(10-14). The alpha and beta chains form an alternating ring which encloses part of the gamma chain. F(1) is attached to F(0) by a central stalk formed by the gamma and epsilon chains, while a peripheral stalk is formed by the delta, b and b' chains.

It localises to the plastid. The protein resides in the chloroplast thylakoid membrane. In terms of biological role, f(1)F(0) ATP synthase produces ATP from ADP in the presence of a proton or sodium gradient. F-type ATPases consist of two structural domains, F(1) containing the extramembraneous catalytic core and F(0) containing the membrane proton channel, linked together by a central stalk and a peripheral stalk. During catalysis, ATP synthesis in the catalytic domain of F(1) is coupled via a rotary mechanism of the central stalk subunits to proton translocation. Functionally, component of the F(0) channel, it forms part of the peripheral stalk, linking F(1) to F(0). The sequence is that of ATP synthase subunit b, chloroplastic from Ochrosphaera neapolitana.